The following is a 790-amino-acid chain: Penicillin-binding protein 1A (790 aa).

Topologically, residues 1-20 are cytoplasmic; the sequence is MANVRKRRKKKNEHKALRLT. The helical; Signal-anchor for type II membrane protein transmembrane segment at 21–41 threads the bilayer; it reads FITLLMVFLFSCVAAAGVGLA. Residues 42 to 790 are Extracellular-facing; it reads MIKAAPPLDV…RKRKMIKPQI (749 aa). Positions 61–230 are transglycosylase; it reads SVIYDDKNKL…PQSPSTFYNA (170 aa). E100 (proton donor; for transglycosylase activity) is an active-site residue. The transpeptidase stretch occupies residues 363 to 656; it reads ASVSIVDYKT…AALIWKLIMG (294 aa). S402 functions as the Acyl-ester intermediate; for transpeptidase activity in the catalytic mechanism. Positions 720-790 are disordered; that stretch reads NKDKDDDDDD…RKRKMIKPQI (71 aa). Acidic residues predominate over residues 724–740; the sequence is DDDDDDKDKDKEDEEEN. Residues 741–779 show a composition bias toward basic and acidic residues; sequence KDEKNEDKKEAKDNTKNKDKDKKKDNDRKIDMDKKPDSS. The segment covering 780-790 has biased composition (basic residues); that stretch reads KRKRKMIKPQI.

The protein in the N-terminal section; belongs to the glycosyltransferase 51 family. It in the C-terminal section; belongs to the transpeptidase family.

The protein localises to the cell membrane. The catalysed reaction is [GlcNAc-(1-&gt;4)-Mur2Ac(oyl-L-Ala-gamma-D-Glu-L-Lys-D-Ala-D-Ala)](n)-di-trans,octa-cis-undecaprenyl diphosphate + beta-D-GlcNAc-(1-&gt;4)-Mur2Ac(oyl-L-Ala-gamma-D-Glu-L-Lys-D-Ala-D-Ala)-di-trans,octa-cis-undecaprenyl diphosphate = [GlcNAc-(1-&gt;4)-Mur2Ac(oyl-L-Ala-gamma-D-Glu-L-Lys-D-Ala-D-Ala)](n+1)-di-trans,octa-cis-undecaprenyl diphosphate + di-trans,octa-cis-undecaprenyl diphosphate + H(+). It catalyses the reaction Preferential cleavage: (Ac)2-L-Lys-D-Ala-|-D-Ala. Also transpeptidation of peptidyl-alanyl moieties that are N-acyl substituents of D-alanine.. The protein operates within cell wall biogenesis; peptidoglycan biosynthesis. Its function is as follows. Cell wall formation. Synthesis of cross-linked peptidoglycan from the lipid intermediates. The enzyme has a penicillin-insensitive transglycosylase N-terminal domain (formation of linear glycan strands) and a penicillin-sensitive transpeptidase C-terminal domain (cross-linking of the peptide subunits). This Clostridium tetani (strain Massachusetts / E88) protein is Penicillin-binding protein 1A (pbpA).